The primary structure comprises 843 residues: Eisosome protein 1 (843 aa).

An N-acetylserine modification is found at Ser-2. Ser-2 carries the phosphoserine modification. The tract at residues 13-44 (HNIGKTSGGGSRTSSITSSKKSLKHGSKSLRK) is disordered. A compositionally biased stretch (basic residues) spans 33–44 (KSLKHGSKSLRK). 2 positions are modified to phosphoserine: Ser-88 and Ser-130. The interval 120–174 (KMGPKVVRNNSITSATSKTSKESQTKRKSKESPGAAASKAYSMTMETTSLSSQTN) is disordered. Composition is skewed to polar residues over residues 127–137 (RNNSITSATSK) and 163–174 (TMETTSLSSQTN). Phosphoserine is present on residues Ser-182, Ser-401, Ser-584, and Ser-710. The segment at 717–843 (DLPTQLEKIE…QDAISNQEKK (127 aa)) is disordered. Residue Thr-720 is modified to Phosphothreonine. The span at 752 to 764 (STAAKEATETSSA) shows a compositional bias: low complexity. 2 positions are modified to phosphoserine: Ser-763 and Ser-775. Residues 781-797 (SGKEDANDCKSAEHSKE) show a composition bias toward basic and acidic residues. Residues 798-810 (ISVSQKAGNNKSL) are compositionally biased toward polar residues. Residues Ser-816, Ser-828, Ser-829, and Ser-838 each carry the phosphoserine modification.

The protein belongs to the EIS1 family.

It is found in the cytoplasmic granule. The protein localises to the cell membrane. Required for normal formation of eisosomes, large cytoplasmic protein assemblies that localize to specialized domains on plasma membrane and mark the site of endocytosis. This Saccharomyces cerevisiae (strain Lalvin EC1118 / Prise de mousse) (Baker's yeast) protein is Eisosome protein 1 (EIS1).